Reading from the N-terminus, the 229-residue chain is Translation initiation factor IF-3 (229 aa).

Disordered stretches follow at residues 1–21 (MAIQQRDSRGGTNRDARTNRR) and 184–229 (QAQR…AGPR). The span at 192–203 (AAAQAAPAAAPQ) shows a compositional bias: low complexity. The span at 204-221 (PGAPAAPPAAPAPAPAPE) shows a compositional bias: pro residues.

This sequence belongs to the IF-3 family. Monomer.

It localises to the cytoplasm. Its function is as follows. IF-3 binds to the 30S ribosomal subunit and shifts the equilibrium between 70S ribosomes and their 50S and 30S subunits in favor of the free subunits, thus enhancing the availability of 30S subunits on which protein synthesis initiation begins. The sequence is that of Translation initiation factor IF-3 from Anaeromyxobacter sp. (strain Fw109-5).